We begin with the raw amino-acid sequence, 823 residues long: Bifunctional enzyme flvA (823 aa).

The tract at residues 56-535 (TAKFEMALMP…QRLYDAKFYI (480 aa)) is pyridoxal 5'-phosphate-dependent lyase. At Lys-331 the chain carries N6-(pyridoxal phosphate)lysine. Residues 573–823 (DFDALQQVSH…TLPMNVPLWL (251 aa)) are alpha-ketoglutarate-dependent oxygenase. Fe cation contacts are provided by His-703 and Asp-705.

This sequence in the N-terminal section; belongs to the trans-sulfuration enzymes family. It in the C-terminal section; belongs to the iron/ascorbate-dependent oxidoreductase family. Pyridoxal 5'-phosphate is required as a cofactor. Requires Fe(2+) as cofactor.

It carries out the reaction O-acetyl-L-homoserine + 3-methyl-2-oxobutanoate = (6S)-6-amino-3,3-dimethyl-2-oxoheptanedioate + acetate + H(+). The enzyme catalyses (6S)-3,3-dimethylpiperidine-2,6-dicarboxylate + 2-oxoglutarate + AH2 + O2 + H(+) = (2S)-5,5-dimethylpiperidine-2-carboxylate + succinate + A + 2 CO2 + H2O. The protein operates within secondary metabolite biosynthesis; terpenoid biosynthesis. Bifunctional enzyme; part of the gene cluster that mediates the biosynthesis of flavunoidine, an alkaloidal terpenoid with a tetracyclic cage-like core connected to dimethylcadaverine via a C-N bond and acylated with 5,5-dimethyl-L-pipecolate. The tetracyclic core is synthesized by the terpene cyclase flvE and the cytochrome P450 monooxygenase flvD. The terpene cyclase flvE catalyzes the cyclization of farnesyl pyrophosphate (FPP) to form (1R,4R,5S)-(+)-acoradiene and the cytochrome P450 monooxygenase flvD is then responsible for oxidative conversion of (1R,4R,5S)-(+)-acoradiene into the tetracyclic cage present in the final product flavunoidine. In parallel, the N-methyltransferase flvH dimethylates L-lysine to give N,N-dimethyl-L-Lysin which is decarboxylated by flvG to afford dimethylcadaverine. The terpene cyclase-like protein flvF is the enzyme that attaches the dimethylcadaverine precusor at the C-7 of the tetracyclic cage to yield pre-flavunoidine. The cytochrome monooxygenase flvC hydroxylates the C-10 position of pre-flavunoidine whereas the NRPS flvI acylates the terpenoid core at the hydroxylated C-10 with dimethylpipecolate to yield final flavunoidine. The bifunctional enzyme flvA and the dehydrogenase flvB are responsible for the synthesis of the dimethylpipecolate precursor. The PLP-dependent lyase domain of flvA might use L-O-acetyl-homoserine and alpha-keto-isovalerate to form an intermediary ketone that can cyclize intramolecularly to yield an imine. The imine can be reduced by flvB to yield the 6-carboxylated pipecolate. The C-terminal alpha-KG-dependent oxygenase domain of flvA is then proposed to catalyze the decarboxylation to yield dimethylpipecolate. The polypeptide is Bifunctional enzyme flvA (Aspergillus flavus (strain ATCC 200026 / FGSC A1120 / IAM 13836 / NRRL 3357 / JCM 12722 / SRRC 167)).